The chain runs to 331 residues: Phospholipase A2 inhibitor (331 aa).

The N-terminal stretch at 1–23 (MKSSVPSLLIACLVMSLNSYTQQ) is a signal peptide. Asn-35 carries an N-linked (GlcNAc...) asparagine glycan. LRR repeat units lie at residues 78 to 101 (LPNLQELHLSNNRLKTLPSGLFRN), 103 to 125 (PQLHTLDLSTNHLEDLPPEIFTN), 127 to 149 (SSLILLPLSENQLAELHPSWFQT), 150 to 173 (LGELRILGLDHNQVKEIPISCFDK), 175 to 197 (KKLTSLDLSFNLLRRLAPEMFSG), 199 to 221 (DNLEKLILESNPIQCIVGRTFHW), 223 to 244 (PKLTVLSLKNSSLTNIMGFFQP), and 245 to 268 (LEQLELLDLSDNELTTMEPPVYKT). Asn-125 carries an N-linked (GlcNAc...) asparagine glycan. Residue Asn-232 is glycosylated (N-linked (GlcNAc...) asparagine). Asn-271 is a glycosylation site (N-linked (GlcNAc...) asparagine). In terms of domain architecture, LRRCT spans 279-330 (NPWACDCRLDNLLTWVNEHNIHLYSKEEIVCASPKHFKGECATSLHKSQICP).

In terms of assembly, homotrimer.

It is found in the secreted. Its function is as follows. Inhibits the enzymatic activity of the basic phospholipase A2 (PLA2). The protein is Phospholipase A2 inhibitor of Gloydius brevicaudus siniticus (Chinese mamushi).